Consider the following 239-residue polypeptide: Glycerol-3-phosphate acyltransferase (239 aa).

Transmembrane regions (helical) follow at residues 6-26 (AIAL…SVMF), 61-81 (FLVG…SFLI), 99-119 (YYLT…PLYF), 135-155 (LAIS…VTLI), 159-179 (VSLA…VPWL), and 199-219 (WYII…VFWL).

This sequence belongs to the PlsY family. Probably interacts with PlsX.

The protein localises to the cell membrane. The enzyme catalyses an acyl phosphate + sn-glycerol 3-phosphate = a 1-acyl-sn-glycero-3-phosphate + phosphate. Its pathway is lipid metabolism; phospholipid metabolism. Its function is as follows. Catalyzes the transfer of an acyl group from acyl-phosphate (acyl-PO(4)) to glycerol-3-phosphate (G3P) to form lysophosphatidic acid (LPA). This enzyme utilizes acyl-phosphate as fatty acyl donor, but not acyl-CoA or acyl-ACP. This Mycoplasma pneumoniae (strain ATCC 29342 / M129 / Subtype 1) (Mycoplasmoides pneumoniae) protein is Glycerol-3-phosphate acyltransferase.